A 41-amino-acid polypeptide reads, in one-letter code: MKIRNSLKSLKDRHRDNRVIRRRGRVYVINKTQKRFKARQG.

Belongs to the bacterial ribosomal protein bL36 family.

The polypeptide is Large ribosomal subunit protein bL36 (Novosphingobium aromaticivorans (strain ATCC 700278 / DSM 12444 / CCUG 56034 / CIP 105152 / NBRC 16084 / F199)).